A 248-amino-acid chain; its full sequence is Adenosylcobinamide-GDP ribazoletransferase (248 aa).

A run of 6 helical transmembrane segments spans residues Leu28–Leu48, Val103–Val123, Leu126–Val146, Ala169–Met189, Met193–Leu213, and Val225–Ala245.

It belongs to the CobS family. The cofactor is Mg(2+).

It localises to the cell inner membrane. It carries out the reaction alpha-ribazole + adenosylcob(III)inamide-GDP = adenosylcob(III)alamin + GMP + H(+). It catalyses the reaction alpha-ribazole 5'-phosphate + adenosylcob(III)inamide-GDP = adenosylcob(III)alamin 5'-phosphate + GMP + H(+). Its pathway is cofactor biosynthesis; adenosylcobalamin biosynthesis; adenosylcobalamin from cob(II)yrinate a,c-diamide: step 7/7. In terms of biological role, joins adenosylcobinamide-GDP and alpha-ribazole to generate adenosylcobalamin (Ado-cobalamin). Also synthesizes adenosylcobalamin 5'-phosphate from adenosylcobinamide-GDP and alpha-ribazole 5'-phosphate. The chain is Adenosylcobinamide-GDP ribazoletransferase from Chlorobium phaeobacteroides (strain BS1).